We begin with the raw amino-acid sequence, 555 residues long: Cytochrome P450 monooxygenase abl2 (555 aa).

A run of 2 helical transmembrane segments spans residues 38–58 and 141–161; these read SFDL…ALFI and VFIG…APLA. Asn325 and Asn360 each carry an N-linked (GlcNAc...) asparagine glycan. Cys489 serves as a coordination point for heme.

The protein belongs to the cytochrome P450 family. Heme serves as cofactor.

It is found in the membrane. The protein operates within hormone biosynthesis. Functionally, cytochrome P450 monooxygenase; part of the gene cluster that mediates the biosynthesis of abscisic acid (ABA), a phytohormone that acts antagonistically toward salicylic acid (SA), jasmonic acid (JA) and ethylene (ETH) signaling, to impede plant defense responses. The first step of the pathway catalyzes the reaction from farnesyl diphosphate to alpha-ionylideneethane performed by the alpha-ionylideneethane synthase abl3 via a three-step reaction mechanism involving 2 neutral intermediates, beta-farnesene and allofarnesene. The cytochrome P450 monooxygenase abl1 might then be involved in the conversion of alpha-ionylideneethane to alpha-ionylideneacetic acid. Alpha-ionylideneacetic acid is further converted to abscisic acid in 2 steps involving the cytochrome P450 monooxygenase abl2 and the short-chain dehydrogenase/reductase abl4, via the intermediates 1'-deoxy-ABA or 1',4'-trans-diol-ABA, depending on the order of action of these 2 enzymes. Abl2 is responsible for the hydroxylation of carbon atom C-1' and abl4 might be involved in the oxidation of the C-4' carbon atom. The chain is Cytochrome P450 monooxygenase abl2 from Leptosphaeria maculans (strain JN3 / isolate v23.1.3 / race Av1-4-5-6-7-8) (Blackleg fungus).